The chain runs to 476 residues: MANSTKAEEYEKMSVEQAKASVNSEAESSFSINENTTASGTGLSGKTSVCRQVDTARKRKEFEDDLVKESSSCGEGTPSKKRKLDPEIVPEEKDCGDDEGNSKKRKRETEDVPKDEYSTGDGTQNKRKIALEDVPEKQKNLEEGHSSAVAAHYNELQEVGLEKRSQSRIFYLRNFNNWMKSVLIGEFLEKVRQKKKRDITVLDLGCGKGGDLLKWKKGRINKLVCTDIADVSIKQCQQRYEDMKNRRDSEYIFSAEFITADCSKELLIEKFRDPQMCFDICSCQFVCHYSFESYEQADMMLRNACERLSPGGYFIGTTPNSFELIRRLEASETESFGNEIYTVKFQKKGDYPLFGCKYDFNLEGVVDVPEFLVYFPLLNEMAKKYNMKLVYKKTFLEFYEEKIKNNENKMLLKRMQALEPYPANESSKLVSERVDDYEHAAKYMKNSQVKLPLGTLSKSEWEATSIYLVFAFEKQQ.

Positions 1-14 (MANSTKAEEYEKMS) are enriched in basic and acidic residues. Residues 1 to 128 (MANSTKAEEY…TGDGTQNKRK (128 aa)) are disordered. The span at 20 to 50 (ASVNSEAESSFSINENTTASGTGLSGKTSVC) shows a compositional bias: polar residues. Phosphoserine occurs at positions 24, 28, and 29. 3 stretches are compositionally biased toward basic and acidic residues: residues 54 to 68 (DTAR…DLVK), 84 to 93 (LDPEIVPEEK), and 107 to 117 (RETEDVPKDEY). Phosphoserine is present on S118. Positions 126–128 (KRK) match the Nuclear localization signal motif. Residues 167–475 (SRIFYLRNFN…IYLVFAFEKQ (309 aa)) form the mRNA cap 0 methyltransferase domain. An mRNA-binding site is contributed by 176-177 (NN). S-adenosyl-L-methionine contacts are provided by K180, G205, D227, D261, Q284, and Y289.

Belongs to the class I-like SAM-binding methyltransferase superfamily. mRNA cap 0 methyltransferase family. Interacts with importin alpha, leading to stimulate both RNA-binding and methyltransferase activity. Interaction with importin alpha and beta is required for its nuclear localization, importin beta dissociating in response to RanGTP, allowing RNMT-importin alpha to bind RNA substrates. Interacts with elongating form of polymerase II and RNGTT. Interacts with RAMAC, this interaction significantly enhances RNA-binding and cap methyltransferase activity.

The protein localises to the nucleus. The catalysed reaction is a 5'-end (5'-triphosphoguanosine)-ribonucleoside in mRNA + S-adenosyl-L-methionine = a 5'-end (N(7)-methyl 5'-triphosphoguanosine)-ribonucleoside in mRNA + S-adenosyl-L-homocysteine. Methyltransferase activity is activated by RAMAC. Functionally, catalytic subunit of the mRNA-capping methyltransferase RNMT:RAMAC complex that methylates the N7 position of the added guanosine to the 5'-cap structure of mRNAs. Binds RNA containing 5'-terminal GpppC. In Macaca fascicularis (Crab-eating macaque), this protein is mRNA cap guanine-N(7) methyltransferase (RNMT).